The following is a 409-amino-acid chain: Elongation factor Tu, plastid (409 aa).

Positions 10–214 (KPHINIGTIG…SVDSYIPTPV (205 aa)) constitute a tr-type G domain. The segment at 19-26 (GHVDHGKT) is G1. Residue 19–26 (GHVDHGKT) participates in GTP binding. Thr-26 is a binding site for Mg(2+). A G2 region spans residues 60-64 (GITIN). Positions 81-84 (DCPG) are G3. Residues 81–85 (DCPGH) and 136–139 (NKED) contribute to the GTP site. Residues 136 to 139 (NKED) form a G4 region. The segment at 174 to 176 (SAL) is G5.

Belongs to the TRAFAC class translation factor GTPase superfamily. Classic translation factor GTPase family. EF-Tu/EF-1A subfamily.

The protein resides in the plastid. It catalyses the reaction GTP + H2O = GDP + phosphate + H(+). GTP hydrolase that promotes the GTP-dependent binding of aminoacyl-tRNA to the A-site of ribosomes during protein biosynthesis. This chain is Elongation factor Tu, plastid (tufA), found in Helicosporidium sp. subsp. Simulium jonesii (Green alga).